The primary structure comprises 329 residues: Eukaryotic translation initiation factor 3 subunit I (329 aa).

5 WD repeats span residues 8 to 47 (GHQRAITQIKYNREGDLLFSAAKDSKPNVWWSLNGERLGT), 50 to 89 (GHGGVIWCLDVDWQSINLITGGGDSSCRLWDLETGKNIAT), 145 to 184 (ITDSKVTSMIWGSLDETIITGHEAGDLIQWDLRTGKKIHS), 187 to 226 (EHTHQITDMQLSRDGTMFVTASKDHTAKLFDTNSLELLKE), and 284 to 323 (GHFGPINSLAFHPDGKSYASGGEDGYVRVHNFDQSYFDYT).

The protein belongs to the eIF-3 subunit I family. In terms of assembly, component of the eukaryotic translation initiation factor 3 (eIF-3) complex.

Its subcellular location is the cytoplasm. Component of the eukaryotic translation initiation factor 3 (eIF-3) complex, which is involved in protein synthesis of a specialized repertoire of mRNAs and, together with other initiation factors, stimulates binding of mRNA and methionyl-tRNAi to the 40S ribosome. The eIF-3 complex specifically targets and initiates translation of a subset of mRNAs involved in cell proliferation. This Bombyx mori (Silk moth) protein is Eukaryotic translation initiation factor 3 subunit I.